Consider the following 316-residue polypeptide: MKISNNSLGFLPTTFILVGIPGLESEHLWISVPFSLIYIIIFLGNGIILHVIRTDIALHQPMYLFLAMLALAEVRVSASTLPTVLGIFLFGNTEISLEACLFPDVLHPFFIHDGASCAAGHVFGPLYSHLQPTELHSYPDTAQGLWHRSYYRTEKHYAHGSVAHSLMASALLWPQCPLTFLLSAPQSYLSCGNISVNNIYGIFIVTSTFGLDSLLIVISYGLILHTVLGIATGEGRKKALNTCGSHVCAVLAYYVPMIGLSIVHRLGHRVSPLLQAMMANAYLFFPPVVNPIVYSIKTKEIHGAIVRMLLEKRRRV.

Residues 1 to 31 (MKISNNSLGFLPTTFILVGIPGLESEHLWIS) are Extracellular-facing. Asn5 carries N-linked (GlcNAc...) asparagine glycosylation. A helical transmembrane segment spans residues 32-52 (VPFSLIYIIIFLGNGIILHVI). At 53 to 63 (RTDIALHQPMY) the chain is on the cytoplasmic side. Residues 64 to 84 (LFLAMLALAEVRVSASTLPTV) form a helical membrane-spanning segment. The Extracellular segment spans residues 85–104 (LGIFLFGNTEISLEACLFPD). Cys100 and Cys191 are joined by a disulfide. The helical transmembrane segment at 105-125 (VLHPFFIHDGASCAAGHVFGP) threads the bilayer. Residues 126–161 (LYSHLQPTELHSYPDTAQGLWHRSYYRTEKHYAHGS) are Cytoplasmic-facing. A helical transmembrane segment spans residues 162-182 (VAHSLMASALLWPQCPLTFLL). Residues 183–191 (SAPQSYLSC) are Extracellular-facing. The helical transmembrane segment at 192 to 212 (GNISVNNIYGIFIVTSTFGLD) threads the bilayer. The Cytoplasmic portion of the chain corresponds to 213-242 (SLLIVISYGLILHTVLGIATGEGRKKALNT). A helical membrane pass occupies residues 243 to 263 (CGSHVCAVLAYYVPMIGLSIV). Residues 264 to 275 (HRLGHRVSPLLQ) lie on the Extracellular side of the membrane. Residues 276 to 296 (AMMANAYLFFPPVVNPIVYSI) traverse the membrane as a helical segment. The Cytoplasmic portion of the chain corresponds to 297–316 (KTKEIHGAIVRMLLEKRRRV).

The protein belongs to the G-protein coupled receptor 1 family.

It localises to the cell membrane. Its function is as follows. Odorant receptor. This chain is Olfactory receptor 51J1 (OR51J1), found in Homo sapiens (Human).